The sequence spans 161 residues: Beta-lactoglobulin-1 (161 aa).

2 cysteine pairs are disulfide-bonded: Cys66–Cys159 and Cys106–Cys119.

It belongs to the calycin superfamily. Lipocalin family. Monomer. As to expression, synthesized in mammary gland and secreted in milk.

It localises to the secreted. Functionally, primary component of whey, it binds retinol and is probably involved in the transport of that molecule. This Canis lupus familiaris (Dog) protein is Beta-lactoglobulin-1 (LGB1).